The sequence spans 121 residues: Large ribosomal subunit protein bL19 (121 aa).

Belongs to the bacterial ribosomal protein bL19 family.

Its function is as follows. This protein is located at the 30S-50S ribosomal subunit interface and may play a role in the structure and function of the aminoacyl-tRNA binding site. The chain is Large ribosomal subunit protein bL19 from Borreliella burgdorferi (strain ZS7) (Borrelia burgdorferi).